A 132-amino-acid chain; its full sequence is Small ribosomal subunit protein uS8 (132 aa).

The protein belongs to the universal ribosomal protein uS8 family. Part of the 30S ribosomal subunit. Contacts proteins S5 and S12.

In terms of biological role, one of the primary rRNA binding proteins, it binds directly to 16S rRNA central domain where it helps coordinate assembly of the platform of the 30S subunit. The sequence is that of Small ribosomal subunit protein uS8 from Geobacter sp. (strain M21).